A 180-amino-acid polypeptide reads, in one-letter code: Large ribosomal subunit protein uL6 (180 aa).

The protein belongs to the universal ribosomal protein uL6 family. As to quaternary structure, part of the 50S ribosomal subunit.

Its function is as follows. This protein binds to the 23S rRNA, and is important in its secondary structure. It is located near the subunit interface in the base of the L7/L12 stalk, and near the tRNA binding site of the peptidyltransferase center. The protein is Large ribosomal subunit protein uL6 of Salinispora arenicola (strain CNS-205).